The primary structure comprises 426 residues: Mannose-6-phosphate isomerase (426 aa).

Zn(2+)-binding residues include Q112, H114, E139, and H277. R296 is an active-site residue.

Belongs to the mannose-6-phosphate isomerase type 1 family. Zn(2+) is required as a cofactor.

The protein resides in the cytoplasm. The catalysed reaction is D-mannose 6-phosphate = D-fructose 6-phosphate. It participates in nucleotide-sugar biosynthesis; GDP-alpha-D-mannose biosynthesis; alpha-D-mannose 1-phosphate from D-fructose 6-phosphate: step 1/2. In terms of biological role, involved in the synthesis of the GDP-mannose and dolichol-phosphate-mannose required for a number of critical mannosyl transfer reactions. The protein is Mannose-6-phosphate isomerase (PMI40) of Ogataea parapolymorpha (strain ATCC 26012 / BCRC 20466 / JCM 22074 / NRRL Y-7560 / DL-1) (Yeast).